A 395-amino-acid chain; its full sequence is Elongation factor Tu (395 aa).

One can recognise a tr-type G domain in the interval K10 to R205. The G1 stretch occupies residues G19 to T26. G19–T26 is a binding site for GTP. Residue T26 coordinates Mg(2+). The G2 stretch occupies residues G60–N64. The interval D81–G84 is G3. GTP-binding positions include D81–H85 and N136–D139. Positions N136–D139 are G4. A G5 region spans residues S174–L176.

This sequence belongs to the TRAFAC class translation factor GTPase superfamily. Classic translation factor GTPase family. EF-Tu/EF-1A subfamily. In terms of assembly, monomer.

Its subcellular location is the cytoplasm. It carries out the reaction GTP + H2O = GDP + phosphate + H(+). In terms of biological role, GTP hydrolase that promotes the GTP-dependent binding of aminoacyl-tRNA to the A-site of ribosomes during protein biosynthesis. This Cytophaga hutchinsonii (strain ATCC 33406 / DSM 1761 / CIP 103989 / NBRC 15051 / NCIMB 9469 / D465) protein is Elongation factor Tu.